A 323-amino-acid chain; its full sequence is tRNA-modifying protein YgfZ (323 aa).

Folate contacts are provided by tryptophan 29 and tryptophan 182.

This sequence belongs to the tRNA-modifying YgfZ family.

The protein localises to the cytoplasm. Functionally, folate-binding protein involved in regulating the level of ATP-DnaA and in the modification of some tRNAs. It is probably a key factor in regulatory networks that act via tRNA modification, such as initiation of chromosomal replication. The polypeptide is tRNA-modifying protein YgfZ (Vibrio atlanticus (strain LGP32) (Vibrio splendidus (strain Mel32))).